Consider the following 49-residue polypeptide: MRVKVTLACTECKQRNYNTMKNKKNDPNRIEMKKYCKFCKTHTLHRETK.

It belongs to the bacterial ribosomal protein bL33 family.

The chain is Large ribosomal subunit protein bL33 from Clostridium perfringens (strain ATCC 13124 / DSM 756 / JCM 1290 / NCIMB 6125 / NCTC 8237 / Type A).